Reading from the N-terminus, the 481-residue chain is Protein nucleotidyltransferase YdiU (481 aa).

8 residues coordinate ATP: glycine 87, glycine 89, arginine 90, lysine 110, aspartate 122, glycine 123, arginine 173, and arginine 180. Aspartate 249 acts as the Proton acceptor in catalysis. Residues asparagine 250 and aspartate 259 each coordinate Mg(2+). ATP is bound at residue aspartate 259.

It belongs to the SELO family. The cofactor is Mg(2+). Mn(2+) serves as cofactor.

It carries out the reaction L-seryl-[protein] + ATP = 3-O-(5'-adenylyl)-L-seryl-[protein] + diphosphate. The enzyme catalyses L-threonyl-[protein] + ATP = 3-O-(5'-adenylyl)-L-threonyl-[protein] + diphosphate. The catalysed reaction is L-tyrosyl-[protein] + ATP = O-(5'-adenylyl)-L-tyrosyl-[protein] + diphosphate. It catalyses the reaction L-histidyl-[protein] + UTP = N(tele)-(5'-uridylyl)-L-histidyl-[protein] + diphosphate. It carries out the reaction L-seryl-[protein] + UTP = O-(5'-uridylyl)-L-seryl-[protein] + diphosphate. The enzyme catalyses L-tyrosyl-[protein] + UTP = O-(5'-uridylyl)-L-tyrosyl-[protein] + diphosphate. Its function is as follows. Nucleotidyltransferase involved in the post-translational modification of proteins. It can catalyze the addition of adenosine monophosphate (AMP) or uridine monophosphate (UMP) to a protein, resulting in modifications known as AMPylation and UMPylation. This is Protein nucleotidyltransferase YdiU from Mycobacterium sp. (strain KMS).